The sequence spans 327 residues: GMP reductase (327 aa).

Cysteine 176 serves as the catalytic Thioimidate intermediate. 205–228 (IIADGGIRTHGDIAKSIRFGASMV) contributes to the NADP(+) binding site.

Belongs to the IMPDH/GMPR family. GuaC type 2 subfamily.

The enzyme catalyses IMP + NH4(+) + NADP(+) = GMP + NADPH + 2 H(+). Functionally, catalyzes the irreversible NADPH-dependent deamination of GMP to IMP. It functions in the conversion of nucleobase, nucleoside and nucleotide derivatives of G to A nucleotides, and in maintaining the intracellular balance of A and G nucleotides. This chain is GMP reductase, found in Streptococcus pyogenes serotype M5 (strain Manfredo).